Reading from the N-terminus, the 811-residue chain is Ribonucleoside-diphosphate reductase large chain (811 aa).

The region spanning 1–92 is the ATP-cone domain; the sequence is MFVYKRDGRQ…VSNLHKQTEK (92 aa). ATP contacts are provided by residues 5-6, 11-17, Thr-53, and Asp-57; these read KR and EKVAFDK. Residues Ser-202 and Ser-217 each coordinate GDP. A disulfide bridge links Cys-218 with Cys-444. DTTP is bound by residues 226–228, Lys-243, Arg-256, and 263–264; these read DSI and AG. Asn-427 provides a ligand contact to GDP. Residue Asn-427 is the Proton acceptor of the active site. The active-site Cysteine radical intermediate is Cys-429. Residues Glu-431 and 603 to 606 contribute to the GDP site; that span reads TAST. Residue Glu-431 is the Proton acceptor of the active site.

Belongs to the ribonucleoside diphosphate reductase large chain family. In terms of assembly, heterodimer of a large and a small subunit. Interacts with SPD1.

The catalysed reaction is a 2'-deoxyribonucleoside 5'-diphosphate + [thioredoxin]-disulfide + H2O = a ribonucleoside 5'-diphosphate + [thioredoxin]-dithiol. Its activity is regulated as follows. Under complex allosteric control mediated by deoxynucleoside triphosphates and ATP binding to separate specificity and activation sites on the large subunit. The type of nucleotide bound at the specificity site determines substrate preference. It seems probable that ATP makes the enzyme reduce CDP and UDP, dGTP favors ADP reduction and dTTP favors GDP reduction. Stimulated by ATP and inhibited by dATP binding to the activity site. In terms of biological role, provides the precursors necessary for DNA synthesis. Catalyzes the biosynthesis of deoxyribonucleotides from the corresponding ribonucleotides. The protein is Ribonucleoside-diphosphate reductase large chain (cdc22) of Schizosaccharomyces pombe (strain 972 / ATCC 24843) (Fission yeast).